We begin with the raw amino-acid sequence, 1327 residues long: uncharacterized protein (1327 aa).

Position 884–885 (884–885 (WD)) interacts with substrate. Residue Glu1023 is the Proton donor of the active site. 1143-1144 (KQ) contacts substrate.

In the N-terminal section; belongs to the trehalose phosphatase family. The protein in the C-terminal section; belongs to the glycosyl hydrolase 65 family.

This is an uncharacterized protein from Mycobacterium tuberculosis (strain CDC 1551 / Oshkosh).